A 359-amino-acid chain; its full sequence is Diacyltrehalose acyltransferase Chp2 (359 aa).

Residues 4–24 (VIAGAFAVWLVGWAGGFGTAI) traverse the membrane as a helical segment. Residues 79 to 316 (PNAKHDLIDY…VLQPQIDAAY (238 aa)) form the PE-PPE domain.

This sequence belongs to the mycobacterial PPE family.

The protein localises to the cell inner membrane. Activity is probably potentiated by the DAT/PAT transporter MmpL10. Inhibited by the lipase inhibitor tetrahydrolipstatin (THL). In terms of biological role, involved in the final steps of polyacyltrehalose (PAT) biosynthesis. Catalyzes the transfer of three mycolipenoyl groups onto diacyltrehalose (DAT) to form PAT. The sequence is that of Diacyltrehalose acyltransferase Chp2 from Mycobacterium tuberculosis (strain ATCC 25618 / H37Rv).